Consider the following 225-residue polypeptide: UPF0758 protein Shew185_0376 (225 aa).

Residues 102–224 (VLTNPDLTRD…IVSFAERGWI (123 aa)) enclose the MPN domain. Zn(2+) is bound by residues H173, H175, and D186. A JAMM motif motif is present at residues 173 to 186 (HNHPSGNAEPSQAD).

The protein belongs to the UPF0758 family.

This is UPF0758 protein Shew185_0376 from Shewanella baltica (strain OS185).